A 232-amino-acid polypeptide reads, in one-letter code: Cysteine proteinase inhibitor 7 (232 aa).

Positions 1–29 (MDMRRASMCMMLICVSLVLLSGFGQFVIC) are cleaved as a signal peptide. 2 Cystatin domains span residues 46–135 (GGFS…KNII) and 152–214 (FDWR…ERGN). The short motif at 91–95 (QVVAG) is the Secondary area of contact element. Serine 181 is modified (phosphoserine).

This sequence belongs to the cystatin family. Phytocystatin subfamily.

The protein localises to the secreted. Its function is as follows. Specific inhibitor of cysteine proteinases. Probably involved in the regulation of endogenous processes and in defense against pests and pathogens. In Arabidopsis thaliana (Mouse-ear cress), this protein is Cysteine proteinase inhibitor 7 (CYS7).